The sequence spans 240 residues: Probable septum site-determining protein MinC (240 aa).

The protein belongs to the MinC family. As to quaternary structure, interacts with MinD and FtsZ.

Its function is as follows. Cell division inhibitor that blocks the formation of polar Z ring septums. Rapidly oscillates between the poles of the cell to destabilize FtsZ filaments that have formed before they mature into polar Z rings. Prevents FtsZ polymerization. The polypeptide is Probable septum site-determining protein MinC (Aeromonas hydrophila subsp. hydrophila (strain ATCC 7966 / DSM 30187 / BCRC 13018 / CCUG 14551 / JCM 1027 / KCTC 2358 / NCIMB 9240 / NCTC 8049)).